The primary structure comprises 306 residues: MATSSELPDHLYEQMEAGQRLRNQGYRGRFAPSPTGPLHLGNLCTALVSWLQARLANGAWLLRVDDLDQPRNRVGAVESLQQDLHWLGLDWDGPVVFQSRRRGLYNSFLSALRRQGKLYACRCSRRMLADISAPAGRHLVYPGTCRDLELFWGWHEGRLPSWRLRVSKEFSHTSGDVILRRADGFIAYHLATVVDELTLGISEVVRGEDLLVAMNAQLALINEISARPVIYRHVPLLCDDQGRKLAKREGHAGLDSLRSEGLGPSHVVGWLAASQSLVPFGAELTAGELLSELKKKEGVLKSVLKP.

L-glutamate contacts are provided by residues 29-33 (RFAPS) and aspartate 65. The 'HIGH' region signature appears at 32–42 (PSPTGPLHLGN). Zn(2+) is bound by residues cysteine 121, cysteine 123, tyrosine 141, and cysteine 145. L-glutamate contacts are provided by tyrosine 188 and arginine 206. The short motif at 244–248 (KLAKR) is the 'KMSKS' region element. Residue lysine 247 coordinates ATP.

Belongs to the class-I aminoacyl-tRNA synthetase family. GluQ subfamily. Zn(2+) is required as a cofactor.

In terms of biological role, catalyzes the tRNA-independent activation of glutamate in presence of ATP and the subsequent transfer of glutamate onto a tRNA(Asp). Glutamate is transferred on the 2-amino-5-(4,5-dihydroxy-2-cyclopenten-1-yl) moiety of the queuosine in the wobble position of the QUC anticodon. The chain is Glutamyl-Q tRNA(Asp) synthetase from Prochlorococcus marinus (strain MIT 9303).